Reading from the N-terminus, the 255-residue chain is Hydroxyacylglutathione hydrolase (255 aa).

Zn(2+) contacts are provided by histidine 56, histidine 58, aspartate 60, histidine 61, histidine 114, aspartate 133, and histidine 171.

It belongs to the metallo-beta-lactamase superfamily. Glyoxalase II family. In terms of assembly, monomer. Zn(2+) is required as a cofactor.

It catalyses the reaction an S-(2-hydroxyacyl)glutathione + H2O = a 2-hydroxy carboxylate + glutathione + H(+). Its pathway is secondary metabolite metabolism; methylglyoxal degradation; (R)-lactate from methylglyoxal: step 2/2. Functionally, thiolesterase that catalyzes the hydrolysis of S-D-lactoyl-glutathione to form glutathione and D-lactic acid. In Bradyrhizobium sp. (strain ORS 278), this protein is Hydroxyacylglutathione hydrolase.